An 870-amino-acid chain; its full sequence is Eukaryotic translation initiation factor 3 subunit C (870 aa).

Residues Met1–Asn92 form a disordered region. A compositionally biased stretch (acidic residues) spans Ser14–Ser54. The PCI domain maps to Phe608 to Glu782. Residues Thr807–Ala870 form a disordered region. The span at Gly824–Gly844 shows a compositional bias: gly residues.

The protein belongs to the eIF-3 subunit C family. As to quaternary structure, component of the eukaryotic translation initiation factor 3 (eIF-3) complex.

Its subcellular location is the cytoplasm. In terms of biological role, component of the eukaryotic translation initiation factor 3 (eIF-3) complex, which is involved in protein synthesis of a specialized repertoire of mRNAs and, together with other initiation factors, stimulates binding of mRNA and methionyl-tRNAi to the 40S ribosome. The eIF-3 complex specifically targets and initiates translation of a subset of mRNAs involved in cell proliferation. The protein is Eukaryotic translation initiation factor 3 subunit C (nip1) of Sclerotinia sclerotiorum (strain ATCC 18683 / 1980 / Ss-1) (White mold).